The chain runs to 251 residues: Protection of telomeres homolog 2 (251 aa).

The disordered stretch occupies residues 221 to 251 (ELDNWPEGPPKTFAEAIARANNSRRPRDPPQ).

The protein belongs to the telombin family.

It localises to the nucleus. It is found in the chromosome. Its subcellular location is the telomere. Telomeric DNA-binding protein, which binds to two or more single-stranded G-rich repeat sequences (G-strand), with high specificity to the 5'-TTAGGC-3' sequence. In addition, repeat sequence binding requires a 3' single-stranded telomeric overhang. Acts redundantly with pot-1 to negatively regulate telomerase-mediated telomere extension. Also regulates telomere length by the telomerase-independent telomere maintenance pathway called ALT (alternative lengthening of telomeres). Does not appear to have a role in anchoring telomeres to the nuclear envelope. This Caenorhabditis elegans protein is Protection of telomeres homolog 2.